Here is a 245-residue protein sequence, read N- to C-terminus: tRNA pseudouridine synthase A 1 (245 aa).

Residue Asp53 is the Nucleophile of the active site. Tyr111 serves as a coordination point for substrate.

Belongs to the tRNA pseudouridine synthase TruA family. As to quaternary structure, homodimer.

It catalyses the reaction uridine(38/39/40) in tRNA = pseudouridine(38/39/40) in tRNA. Functionally, formation of pseudouridine at positions 38, 39 and 40 in the anticodon stem and loop of transfer RNAs. The protein is tRNA pseudouridine synthase A 1 of Clostridium tetani (strain Massachusetts / E88).